Here is a 1059-residue protein sequence, read N- to C-terminus: Isoleucine--tRNA ligase (1059 aa).

The short motif at 47–57 (PYTTGHIHLGT) is the 'HIGH' region element. A 'KMSKS' region motif is present at residues 591 to 595 (KMSKS). Lysine 594 provides a ligand contact to ATP.

Belongs to the class-I aminoacyl-tRNA synthetase family. IleS type 2 subfamily. Monomer. It depends on Zn(2+) as a cofactor.

It is found in the cytoplasm. The enzyme catalyses tRNA(Ile) + L-isoleucine + ATP = L-isoleucyl-tRNA(Ile) + AMP + diphosphate. Its function is as follows. Catalyzes the attachment of isoleucine to tRNA(Ile). As IleRS can inadvertently accommodate and process structurally similar amino acids such as valine, to avoid such errors it has two additional distinct tRNA(Ile)-dependent editing activities. One activity is designated as 'pretransfer' editing and involves the hydrolysis of activated Val-AMP. The other activity is designated 'posttransfer' editing and involves deacylation of mischarged Val-tRNA(Ile). The sequence is that of Isoleucine--tRNA ligase from Methanoculleus marisnigri (strain ATCC 35101 / DSM 1498 / JR1).